A 250-amino-acid chain; its full sequence is Small ribosomal subunit protein uS3z (250 aa).

The 72-residue stretch at 21 to 92 (LNEVLTRELA…SVELYAEKVN (72 aa)) folds into the KH type-2 domain.

It belongs to the universal ribosomal protein uS3 family. As to quaternary structure, interacts with SNRNP35.

This Arabidopsis thaliana (Mouse-ear cress) protein is Small ribosomal subunit protein uS3z (RPS3A).